A 229-amino-acid polypeptide reads, in one-letter code: UPF0173 metal-dependent hydrolase SAB1566c (229 aa).

It belongs to the UPF0173 family.

The chain is UPF0173 metal-dependent hydrolase SAB1566c from Staphylococcus aureus (strain bovine RF122 / ET3-1).